A 152-amino-acid chain; its full sequence is Endoribonuclease YbeY (152 aa).

Zn(2+) is bound by residues His-113, His-117, and His-123.

This sequence belongs to the endoribonuclease YbeY family. The cofactor is Zn(2+).

The protein localises to the cytoplasm. Single strand-specific metallo-endoribonuclease involved in late-stage 70S ribosome quality control and in maturation of the 3' terminus of the 16S rRNA. In Acidovorax ebreus (strain TPSY) (Diaphorobacter sp. (strain TPSY)), this protein is Endoribonuclease YbeY.